The primary structure comprises 739 residues: Lysyl oxidase homolog 3A (739 aa).

An N-terminal signal peptide occupies residues 1–25 (MLRSELRDMVVAMVLWGILLPFCLS). SRCR domains follow at residues 38-139 (FRLA…VICK), 166-272 (LRPL…VSCV), 293-393 (MRLK…VICN), and 403-511 (MRLT…VICS). Cystine bridges form between Cys-64–Cys-128, Cys-77–Cys-138, Cys-108–Cys-118, Cys-196–Cys-261, Cys-209–Cys-271, Cys-238–Cys-248, Cys-318–Cys-382, Cys-331–Cys-392, Cys-362–Cys-372, Cys-433–Cys-497, Cys-446–Cys-510, and Cys-479–Cys-489. Asn-256 carries an N-linked (GlcNAc...) asparagine glycan. The N-linked (GlcNAc...) asparagine glycan is linked to Asn-468. Asn-611 carries N-linked (GlcNAc...) asparagine glycosylation. Positions 620–656 (KASFCLEDTECHEGVSKRYECANFGEQGITVGCWDLY) form a cross-link, lysine tyrosylquinone (Lys-Tyr). Tyr-656 is subject to 2',4',5'-topaquinone.

Belongs to the lysyl oxidase family. The cofactor is Cu cation. Lysine tyrosylquinone residue serves as cofactor. Post-translationally, the lysine tyrosylquinone cross-link (LTQ) is generated by condensation of the epsilon-amino group of a lysine with a topaquinone produced by oxidation of tyrosine.

Its subcellular location is the secreted. The protein localises to the extracellular space. It localises to the cytoplasm. The protein resides in the nucleus. It carries out the reaction L-lysyl-[protein] + O2 + H2O = (S)-2-amino-6-oxohexanoyl-[protein] + H2O2 + NH4(+). The catalysed reaction is N(6)-acetyl-L-lysyl-[protein] + O2 + H2O = acetamide + (S)-2-amino-6-oxohexanoyl-[protein] + H2O2. Protein-lysine 6-oxidase that mediates the oxidation of peptidyl lysine residues to allysine in target proteins. Catalyzes the post-translational oxidative deamination of peptidyl lysine residues in precursors of elastin and different types of collagens, a prerequisite in the formation of cross-links between collagens and elastin. Can mediate oxidation of lysine residues that are acetylated. Also able to catalyze deacetylation of lysine residues. The protein is Lysyl oxidase homolog 3A of Danio rerio (Zebrafish).